The chain runs to 170 residues: Large ribosomal subunit protein uL5 (170 aa).

It belongs to the universal ribosomal protein uL5 family. In terms of assembly, part of the 50S ribosomal subunit; contacts the 5S rRNA and probably tRNA. Forms a bridge to the 30S subunit in the 70S ribosome.

In terms of biological role, this is one of the proteins that bind and probably mediate the attachment of the 5S RNA into the large ribosomal subunit, where it forms part of the central protuberance. In the 70S ribosome it contacts protein S13 of the 30S subunit (bridge B1b), connecting the 2 subunits; this bridge is implicated in subunit movement. May contact the P site tRNA; the 5S rRNA and some of its associated proteins might help stabilize positioning of ribosome-bound tRNAs. This is Large ribosomal subunit protein uL5 from Thermoplasma acidophilum (strain ATCC 25905 / DSM 1728 / JCM 9062 / NBRC 15155 / AMRC-C165).